Reading from the N-terminus, the 668-residue chain is Nuclear pore complex protein Nup75 (668 aa).

Belongs to the nucleoporin Nup85 family. Component of the nuclear pore complex (NPC). Component of the NPC Nup107-160 subcomplex.

The protein resides in the nucleus. It is found in the nuclear pore complex. Its subcellular location is the nucleus membrane. In terms of biological role, component of the nuclear pore complex (NPC) that seems to be required for NPC assembly and maintenance. Required for nuclear import of phosphorylated Mad via importin msk. Has no role in classical nuclear localization signal (cNLS)-dependent nuclear import via importin-beta. Facilitates the interaction between Nup93 and sec13 with msk. This chain is Nuclear pore complex protein Nup75, found in Drosophila melanogaster (Fruit fly).